Here is a 305-residue protein sequence, read N- to C-terminus: GMP synthase [glutamine-hydrolyzing] subunit B (305 aa).

Residues 2 to 184 (VKPEKFIPKA…LQLPEEICER (183 aa)) form the GMPS ATP-PPase domain. 29 to 35 (SGGVDSS) contributes to the ATP binding site.

As to quaternary structure, heterodimer composed of a glutamine amidotransferase subunit (A) and a GMP-binding subunit (B).

It catalyses the reaction XMP + L-glutamine + ATP + H2O = GMP + L-glutamate + AMP + diphosphate + 2 H(+). It participates in purine metabolism; GMP biosynthesis; GMP from XMP (L-Gln route): step 1/1. Its function is as follows. Catalyzes the synthesis of GMP from XMP. This Methanosarcina acetivorans (strain ATCC 35395 / DSM 2834 / JCM 12185 / C2A) protein is GMP synthase [glutamine-hydrolyzing] subunit B (guaAB).